The following is a 232-amino-acid chain: Small ribosomal subunit protein uS3 (232 aa).

The region spanning 39 to 107 (IRAFLKKKLY…EVNVNIKEER (69 aa)) is the KH type-2 domain. Positions 211–232 (GVQPEKTEEEAPKKTRRARRGK) are disordered. Basic and acidic residues predominate over residues 213–223 (QPEKTEEEAPK).

The protein belongs to the universal ribosomal protein uS3 family. Part of the 30S ribosomal subunit. Forms a tight complex with proteins S10 and S14.

Its function is as follows. Binds the lower part of the 30S subunit head. Binds mRNA in the 70S ribosome, positioning it for translation. The protein is Small ribosomal subunit protein uS3 of Campylobacter concisus (strain 13826).